Consider the following 549-residue polypeptide: MQADYVIVGSGSAGSAIAYRLSEDGRYSVIVIEAGGSDFGPFIQMPAALAWPMSMKRYNWGYLSEPEPNLDNRRITAPRGKVIGGSSSINGLVYVRGHAEDFNRWEELGAQGWAYADVLPYFKRMEHSHGGEEGWRGTDGPLHVQRGPVSNPLFHAFIQAGAQAGFELTDDYNGSKQEGFGLMEQTIHNGRRWSAANAYLKPALKRGNVTLVNGFARKVIIENGRAVGVEIERRGRVETVKANREVIVSASSFNSPKLLMLSGIGPAAHLKDMGIEVKADRPGVGANLQDHMEFYFQQVSTKPVSLYSWLPWFWQGVAGAQWLLSKGGLGASNQFEACAFLRSAPGLKQPDIQYHFLPVAISYDGKAAAKSHGFQAHVGYNLSKSRGNVTLRSADPHDDPVIRFNYMSHPEDWEKFRHCVRLTREIFGQKAFDDFRGPEIQPGENIETDEQIDAFLREHLESAYHPCGTCRMGDRNDPMAVVDPECRVIGVEGLRVADSSIFPHVTYGNLNGPSIMTGEKAADHILGKTPLPRSNQEPWVNPRAAVSDR.

4 to 33 (DYVIVGSGSAGSAIAYRLSEDGRYSVIVIE) serves as a coordination point for FAD. His-465 serves as the catalytic Proton acceptor. The tract at residues 528 to 549 (KTPLPRSNQEPWVNPRAAVSDR) is disordered.

The protein belongs to the GMC oxidoreductase family. It depends on FAD as a cofactor.

The enzyme catalyses choline + A = betaine aldehyde + AH2. It carries out the reaction betaine aldehyde + NAD(+) + H2O = glycine betaine + NADH + 2 H(+). Its pathway is amine and polyamine biosynthesis; betaine biosynthesis via choline pathway; betaine aldehyde from choline (cytochrome c reductase route): step 1/1. Involved in the biosynthesis of the osmoprotectant glycine betaine. Catalyzes the oxidation of choline to betaine aldehyde and betaine aldehyde to glycine betaine at the same rate. This Agrobacterium fabrum (strain C58 / ATCC 33970) (Agrobacterium tumefaciens (strain C58)) protein is Oxygen-dependent choline dehydrogenase.